Here is a 160-residue protein sequence, read N- to C-terminus: SsrA-binding protein (160 aa).

Residues 131–160 (KKEYDKRDTERERDAGRELQRAVRNKGKED) form a disordered region.

This sequence belongs to the SmpB family.

The protein localises to the cytoplasm. Its function is as follows. Required for rescue of stalled ribosomes mediated by trans-translation. Binds to transfer-messenger RNA (tmRNA), required for stable association of tmRNA with ribosomes. tmRNA and SmpB together mimic tRNA shape, replacing the anticodon stem-loop with SmpB. tmRNA is encoded by the ssrA gene; the 2 termini fold to resemble tRNA(Ala) and it encodes a 'tag peptide', a short internal open reading frame. During trans-translation Ala-aminoacylated tmRNA acts like a tRNA, entering the A-site of stalled ribosomes, displacing the stalled mRNA. The ribosome then switches to translate the ORF on the tmRNA; the nascent peptide is terminated with the 'tag peptide' encoded by the tmRNA and targeted for degradation. The ribosome is freed to recommence translation, which seems to be the essential function of trans-translation. The polypeptide is SsrA-binding protein (Pseudomonas fluorescens (strain Pf0-1)).